A 493-amino-acid polypeptide reads, in one-letter code: UDP-N-acetylmuramoyl-L-alanyl-D-glutamate--2,6-diaminopimelate ligase (493 aa).

Residues leucine 30 and serine 32 each coordinate UDP-N-acetyl-alpha-D-muramoyl-L-alanyl-D-glutamate. ATP is bound at residue glycine 117–threonine 123. UDP-N-acetyl-alpha-D-muramoyl-L-alanyl-D-glutamate-binding positions include asparagine 158, threonine 159–threonine 160, serine 186, glutamine 192, and arginine 194. N6-carboxylysine is present on lysine 226. Meso-2,6-diaminopimelate is bound by residues arginine 388, aspartate 412–arginine 415, glycine 463, and glutamate 467. The Meso-diaminopimelate recognition motif motif lies at aspartate 412–arginine 415.

The protein belongs to the MurCDEF family. MurE subfamily. The cofactor is Mg(2+). In terms of processing, carboxylation is probably crucial for Mg(2+) binding and, consequently, for the gamma-phosphate positioning of ATP.

It localises to the cytoplasm. It carries out the reaction UDP-N-acetyl-alpha-D-muramoyl-L-alanyl-D-glutamate + meso-2,6-diaminopimelate + ATP = UDP-N-acetyl-alpha-D-muramoyl-L-alanyl-gamma-D-glutamyl-meso-2,6-diaminopimelate + ADP + phosphate + H(+). It participates in cell wall biogenesis; peptidoglycan biosynthesis. Catalyzes the addition of meso-diaminopimelic acid to the nucleotide precursor UDP-N-acetylmuramoyl-L-alanyl-D-glutamate (UMAG) in the biosynthesis of bacterial cell-wall peptidoglycan. This is UDP-N-acetylmuramoyl-L-alanyl-D-glutamate--2,6-diaminopimelate ligase from Vibrio vulnificus (strain YJ016).